The following is a 405-amino-acid chain: Farnesyl pyrophosphate synthase (405 aa).

Positions 158 and 162 each coordinate Mg(2+). The DDXXD motif motif lies at 158-162 (DDLAD).

It belongs to the FPP/GGPP synthase family. It depends on Mg(2+) as a cofactor.

It catalyses the reaction isopentenyl diphosphate + (2E)-geranyl diphosphate = (2E,6E)-farnesyl diphosphate + diphosphate. The protein operates within pheromone biosynthesis. Its function is as follows. Farnesyl pyrophosphate synthase involved in murgantiol biosynthesis, a male-released aggregation pheromone, by catalyzing the formation of (2E,6E)-farnesyl diphosphate. In Murgantia histrionica (Harlequin bug), this protein is Farnesyl pyrophosphate synthase.